Here is a 4007-residue protein sequence, read N- to C-terminus: PKS-NRPS hybrid synthetase psoA (4007 aa).

One can recognise a Ketosynthase family 3 (KS3) domain in the interval lysine 8–serine 444. Active-site for beta-ketoacyl synthase activity residues include cysteine 182, histidine 321, and histidine 364. A malonyl-CoA:ACP transacylase (MAT) domain region spans residues valine 575–leucine 897. Positions histidine 969 to glutamate 1105 are N-terminal hotdog fold. A dehydratase (DH) domain region spans residues histidine 969 to methionine 1147. The region spanning histidine 969–lysine 1276 is the PKS/mFAS DH domain. Histidine 1001 serves as the catalytic Proton acceptor; for dehydratase activity. The segment at aspartate 1120–lysine 1276 is C-terminal hotdog fold. Aspartate 1179 functions as the Proton donor; for dehydratase activity in the catalytic mechanism. The segment at threonine 2131–valine 2305 is ketoreductase (KR) domain. Residues glutamate 2418 to leucine 2495 form the Carrier 1 domain. The residue at position 2455 (serine 2455) is an O-(pantetheine 4'-phosphoryl)serine. Positions proline 2513 to proline 2550 are disordered. Residues arginine 2518 to aspartate 2531 show a composition bias toward basic and acidic residues. The tract at residues glutamine 2589–valine 2885 is condensation (C) domain. Positions threonine 3076–glutamine 3478 are adenylation (A) domain. Residues threonine 3576 to serine 3652 enclose the Carrier 2 domain. The residue at position 3612 (serine 3612) is an O-(pantetheine 4'-phosphoryl)serine. Residues leucine 3696–isoleucine 3920 form a reductase (R) domain region.

This sequence in the C-terminal section; belongs to the NRP synthetase family.

Its pathway is secondary metabolite biosynthesis. In terms of biological role, PKS-NRPS hybrid synthetase; part of the gene cluster that mediates the biosynthesis of pseurotin A, a competitive inhibitor of chitin synthase and an inducer of nerve-cell proliferation. The PKS-NRPS hybrid synthetase psoA is responsible for the biosynthesis of azaspirene, one of the first intermediates having the 1-oxa-7-azaspiro[4,4]-non-2-ene-4,6-dione core of pseurotin, via condensation of one acetyl-CoA, 4 malonyl-CoA, and a L-phenylalanine molecule. The dual-functional monooxygenase/methyltransferase psoF seems to be involved in the addition of the C3 methyl group onto the pseurotin scaffold. Azaspirene is then converted to synerazol through 4 steps including oxidation of C17 by the cytochrome P450 monooxygenase psoD, O-methylation of the hydroxy group of C8 by the methyltransferase psoC, and the trans-to-cis isomerization of the C13 olefin by the glutathione S-transferase psoE. The fourth step of synerazol production is performed by the dual-functional monooxygenase/methyltransferase psoF which seems to catalyze the epoxidation of the intermediate deepoxy-synerazol. Synerazol can be attacked by a water molecule nonenzymatically at two different positions to yield two diol products, pseurotin A and pseurotin D. The protein is PKS-NRPS hybrid synthetase psoA of Aspergillus fumigatus (strain ATCC MYA-4609 / CBS 101355 / FGSC A1100 / Af293) (Neosartorya fumigata).